A 217-amino-acid polypeptide reads, in one-letter code: MIENNEFDVADLRREYTRGGLRRNDLTTNPLELFEHWLKQACDARLADPTAMCVATVDENGQPYQRIVLLKHFDDKGLVFYTNLGSRKAQQLANNPHISLLFPWHMLDRQVIFLGKAERLSTFEVMKYFASRPKDSQIGAWVSQQSSRISARGVLESKFLELKQKFQQGEVPLPSFWGGFRVNFDSVEFWQGGANRLHDRFLYQRDGNDWKIDRLAP.

Residues 13–16 (RREY) and Lys71 each bind substrate. Residues 66–71 (RIVLLK), 81–82 (YT), Arg87, Lys88, and Gln110 each bind FMN. Tyr128, Arg132, and Ser136 together coordinate substrate. FMN-binding positions include 145 to 146 (QS) and Trp190. Residue 196–198 (RLH) coordinates substrate. Position 200 (Arg200) interacts with FMN.

The protein belongs to the pyridoxamine 5'-phosphate oxidase family. As to quaternary structure, homodimer. It depends on FMN as a cofactor.

The catalysed reaction is pyridoxamine 5'-phosphate + O2 + H2O = pyridoxal 5'-phosphate + H2O2 + NH4(+). It catalyses the reaction pyridoxine 5'-phosphate + O2 = pyridoxal 5'-phosphate + H2O2. Its pathway is cofactor metabolism; pyridoxal 5'-phosphate salvage; pyridoxal 5'-phosphate from pyridoxamine 5'-phosphate: step 1/1. It participates in cofactor metabolism; pyridoxal 5'-phosphate salvage; pyridoxal 5'-phosphate from pyridoxine 5'-phosphate: step 1/1. In terms of biological role, catalyzes the oxidation of either pyridoxine 5'-phosphate (PNP) or pyridoxamine 5'-phosphate (PMP) into pyridoxal 5'-phosphate (PLP). The protein is Pyridoxine/pyridoxamine 5'-phosphate oxidase of Serratia proteamaculans (strain 568).